We begin with the raw amino-acid sequence, 393 residues long: Small RNA 2'-O-methyltransferase (393 aa).

S-adenosyl-L-methionine is bound by residues serine 60, aspartate 78, and serine 114. Mg(2+)-binding residues include glutamate 132, glutamate 135, histidine 136, and histidine 181. The interval 283–309 (RVSHLPRRKEQDGEQGDKPKDIGGSKA) is disordered. Residues 290 to 305 (RKEQDGEQGDKPKDIG) show a composition bias toward basic and acidic residues.

It belongs to the methyltransferase superfamily. HEN1 family. Requires Mg(2+) as cofactor.

Its subcellular location is the cytoplasm. The catalysed reaction is small RNA 3'-end nucleotide + S-adenosyl-L-methionine = small RNA 3'-end 2'-O-methylnucleotide + S-adenosyl-L-homocysteine + H(+). Functionally, methyltransferase that adds a 2'-O-methyl group at the 3'-end of piRNAs, a class of 24 to 30 nucleotide RNAs that are generated by a Dicer-independent mechanism and are primarily derived from transposons and other repeated sequence elements. This probably protects the 3'-end of piRNAs from uridylation activity and subsequent degradation. Stabilization of piRNAs is essential for gametogenesis. This is Small RNA 2'-O-methyltransferase (HENMT1) from Macaca fascicularis (Crab-eating macaque).